The following is a 429-amino-acid chain: GTPase Obg (429 aa).

The Obg domain occupies 1–158 (MFVDHVKIYV…LNVILELKVL (158 aa)). The tract at residues 119-143 (AGRGGRGNSRFATPANPAPELSEKG) is disordered. The region spanning 159–329 (ADVGLVGFPS…LLFAIADLLE (171 aa)) is the OBG-type G domain. GTP is bound by residues 165–172 (GFPSVGKS), 190–194 (FTTIV), 212–215 (DLPG), 282–285 (NKMD), and 310–312 (SAV). Residues S172 and T192 each contribute to the Mg(2+) site. Residues 351–429 (KHEAKGEDFE…LQEFEFEFVD (79 aa)) form the OCT domain.

This sequence belongs to the TRAFAC class OBG-HflX-like GTPase superfamily. OBG GTPase family. In terms of assembly, monomer. Requires Mg(2+) as cofactor.

It is found in the cytoplasm. An essential GTPase which binds GTP, GDP and possibly (p)ppGpp with moderate affinity, with high nucleotide exchange rates and a fairly low GTP hydrolysis rate. Plays a role in control of the cell cycle, stress response, ribosome biogenesis and in those bacteria that undergo differentiation, in morphogenesis control. The chain is GTPase Obg from Lysinibacillus sphaericus (strain C3-41).